Reading from the N-terminus, the 373-residue chain is MQTYLVGGAVRDKLLGLGVKDRDWVVVGATPEDMIQRGFKQVGADFPVFLHPDTGEEYALARTERKQGRGYHGFSVYSAPDVSLEDDLRRRDLTINAMAETENGDLVDPFNGHADLEQKKLRHVSEAFAEDPLRILRTARFAARLQPLGFSICRETMALMRQMVTSGELGDLVPERVWQEVQRALHEQAPGVFFDVLRELGALQVLIPELTDEQPFRQGLSALQCIHRKQGSTAQHYAALLSGVPEPDAVARAKAMKSPNDCRELTHLVGLFMAQLNGASPETRLTPELAMELLDKADFWRRPDRFGVLLGTLACTLQSEPDHLIQQLELAAHRAQSVTPHPFLQKGIQGKALGEAIRKERVARITEALHLPE.

Residues glycine 8 and arginine 11 each contribute to the ATP site. CTP is bound by residues glycine 8 and arginine 11. 2 residues coordinate Mg(2+): aspartate 21 and aspartate 23. ATP-binding residues include arginine 91, arginine 137, and arginine 140. 3 residues coordinate CTP: arginine 91, arginine 137, and arginine 140.

The protein belongs to the tRNA nucleotidyltransferase/poly(A) polymerase family. Bacterial CCA-adding enzyme type 2 subfamily. It depends on Mg(2+) as a cofactor.

The enzyme catalyses a tRNA precursor + 2 CTP + ATP = a tRNA with a 3' CCA end + 3 diphosphate. It catalyses the reaction a tRNA with a 3' CCA end + 2 CTP + ATP = a tRNA with a 3' CCACCA end + 3 diphosphate. Functionally, catalyzes the addition and repair of the essential 3'-terminal CCA sequence in tRNAs without using a nucleic acid template. Adds these three nucleotides in the order of C, C, and A to the tRNA nucleotide-73, using CTP and ATP as substrates and producing inorganic pyrophosphate. tRNA 3'-terminal CCA addition is required both for tRNA processing and repair. Also involved in tRNA surveillance by mediating tandem CCA addition to generate a CCACCA at the 3' terminus of unstable tRNAs. While stable tRNAs receive only 3'-terminal CCA, unstable tRNAs are marked with CCACCA and rapidly degraded. This Marinobacter nauticus (strain ATCC 700491 / DSM 11845 / VT8) (Marinobacter aquaeolei) protein is CCA-adding enzyme.